A 257-amino-acid polypeptide reads, in one-letter code: Imidazole glycerol phosphate synthase subunit HisF (257 aa).

Active-site residues include Asp-11 and Asp-130.

It belongs to the HisA/HisF family. In terms of assembly, heterodimer of HisH and HisF.

It localises to the cytoplasm. It carries out the reaction 5-[(5-phospho-1-deoxy-D-ribulos-1-ylimino)methylamino]-1-(5-phospho-beta-D-ribosyl)imidazole-4-carboxamide + L-glutamine = D-erythro-1-(imidazol-4-yl)glycerol 3-phosphate + 5-amino-1-(5-phospho-beta-D-ribosyl)imidazole-4-carboxamide + L-glutamate + H(+). The protein operates within amino-acid biosynthesis; L-histidine biosynthesis; L-histidine from 5-phospho-alpha-D-ribose 1-diphosphate: step 5/9. Functionally, IGPS catalyzes the conversion of PRFAR and glutamine to IGP, AICAR and glutamate. The HisF subunit catalyzes the cyclization activity that produces IGP and AICAR from PRFAR using the ammonia provided by the HisH subunit. This Shewanella sp. (strain ANA-3) protein is Imidazole glycerol phosphate synthase subunit HisF.